Here is a 480-residue protein sequence, read N- to C-terminus: Islet cell autoantigen 1 (480 aa).

The region spanning A50–E253 is the AH domain. 2 stretches are compositionally biased toward basic and acidic residues: residues L276–V293 and E306–K321. Disordered regions lie at residues L276 to G338 and L400 to A421.

It is found in the cytoplasm. It localises to the cytosol. The protein localises to the golgi apparatus membrane. Its subcellular location is the cytoplasmic vesicle. The protein resides in the secretory vesicle membrane. It is found in the secretory vesicle. It localises to the synaptic vesicle membrane. Functionally, may play a role in neurotransmitter secretion. The sequence is that of Islet cell autoantigen 1 from Rattus norvegicus (Rat).